We begin with the raw amino-acid sequence, 263 residues long: Indolethylamine N-methyltransferase (263 aa).

K13 is subject to N6-succinyllysine. S-adenosyl-L-methionine-binding positions include Y20, Y25, 63-64 (GS), Y69, D85, and N90. K96 bears the N6-succinyllysine mark. S-adenosyl-L-methionine is bound by residues 142-143 (DV) and L163.

The protein belongs to the class I-like SAM-binding methyltransferase superfamily. NNMT/PNMT/TEMT family. In terms of assembly, monomer.

The protein localises to the cytoplasm. The catalysed reaction is a tertiary amine + S-adenosyl-L-methionine = a methylated tertiary amine + S-adenosyl-L-homocysteine + H(+). It carries out the reaction a secondary amine + S-adenosyl-L-methionine = a methylated secondary amine + S-adenosyl-L-homocysteine + H(+). It catalyses the reaction a primary amine + S-adenosyl-L-methionine = a methylated primary amine + S-adenosyl-L-homocysteine + H(+). The enzyme catalyses dimethyl sulfide + S-adenosyl-L-methionine = trimethylsulfonium + S-adenosyl-L-homocysteine. In terms of biological role, catalyzes the N-methylation of tryptamine and structurally related compounds. Functions as a thioether S-methyltransferase and is active with a variety of thioethers and the corresponding selenium and tellurium compounds, including 3-methylthiopropionaldehyde, dimethyl selenide, dimethyl telluride, 2-methylthioethylamine, 2-methylthioethanol, methyl-n-propyl sulfide and diethyl sulfide. Plays an important role in the detoxification of selenium compounds. The sequence is that of Indolethylamine N-methyltransferase (INMT) from Pongo abelii (Sumatran orangutan).